A 219-amino-acid polypeptide reads, in one-letter code: Vacuolar iron transporter homolog 2.1 (219 aa).

Residues 1–15 (MTSNVQLSETNSPRN) are compositionally biased toward polar residues. The interval 1-26 (MTSNVQLSETNSPRNQKTRPRAEKEE) is disordered. N-acetylthreonine is present on T2. Topologically, residues 2–37 (TSNVQLSETNSPRNQKTRPRAEKEEVDYMQRAQWLR) are cytoplasmic. Residues 38–58 (AALLGANDGLVTVASLMMGVG) form a helical membrane-spanning segment. The Vacuolar portion of the chain corresponds to 59–67 (SIKEDVKAM). A helical transmembrane segment spans residues 68 to 88 (LLVGFAGLVAGACSMAIGEFV). Topologically, residues 89–133 (SVCTQRDIETAQMKRAIEHKTSLSAIDEQEEEEKKERLPNPGQAA) are cytoplasmic. The chain crosses the membrane as a helical span at residues 134 to 154 (IASALAFSVGAAMPLLGAVFI). The Vacuolar portion of the chain corresponds to 155–161 (ENHKVRM). Residues 162–182 (VVVAVVATIALVVFGVTGAVL) form a helical membrane-spanning segment. The Cytoplasmic segment spans residues 183–193 (GKTSVVKSSVR). A helical membrane pass occupies residues 194–214 (VVIGGWMAMALTFGLTKFIGS). The Vacuolar portion of the chain corresponds to 215–219 (AAMQI).

Belongs to the CCC1 family. Highly expressed in roots. inflorescences and at lower levels in leaves.

The protein resides in the vacuole membrane. The enzyme catalyses Fe(2+)(in) = Fe(2+)(out). In terms of biological role, vacuolar iron transporter involved in the transfer of iron ions from the cytosol to the vacuole for intracellular iron storage. Involved in regulation of cellular iron homeostasis. Vacuolar iron storage is required for seed embryo and seedling development. The sequence is that of Vacuolar iron transporter homolog 2.1 from Arabidopsis thaliana (Mouse-ear cress).